We begin with the raw amino-acid sequence, 212 residues long: Mediator of RNA polymerase II transcription subunit 20 (212 aa).

Belongs to the Mediator complex subunit 20 family. As to quaternary structure, interacts with PPARG. Component of the Mediator complex, which is composed of MED1, MED4, MED6, MED7, MED8, MED9, MED10, MED11, MED12, MED13, MED13L, MED14, MED15, MED16, MED17, MED18, MED19, MED20, MED21, MED22, MED23, MED24, MED25, MED26, MED27, MED29, MED30, MED31, CCNC, CDK8 and CDC2L6/CDK11. The MED12, MED13, CCNC and CDK8 subunits form a distinct module termed the CDK8 module. Mediator containing the CDK8 module is less active than Mediator lacking this module in supporting transcriptional activation. Individual preparations of the Mediator complex lacking one or more distinct subunits have been variously termed ARC, CRSP, DRIP, PC2, SMCC and TRAP.

It is found in the nucleus. Functionally, component of the Mediator complex, a coactivator involved in the regulated transcription of nearly all RNA polymerase II-dependent genes. Mediator functions as a bridge to convey information from gene-specific regulatory proteins to the basal RNA polymerase II transcription machinery. Mediator is recruited to promoters by direct interactions with regulatory proteins and serves as a scaffold for the assembly of a functional preinitiation complex with RNA polymerase II and the general transcription factors. This Homo sapiens (Human) protein is Mediator of RNA polymerase II transcription subunit 20 (MED20).